A 61-amino-acid chain; its full sequence is Photosystem II reaction center protein K (61 aa).

The propeptide occupies methionine 1–alanine 24. The helical transmembrane segment at methionine 40–phenylalanine 60 threads the bilayer.

It belongs to the PsbK family. In terms of assembly, PSII is composed of 1 copy each of membrane proteins PsbA, PsbB, PsbC, PsbD, PsbE, PsbF, PsbH, PsbI, PsbJ, PsbK, PsbL, PsbM, PsbT, PsbX, PsbY, PsbZ, Psb30/Ycf12, at least 3 peripheral proteins of the oxygen-evolving complex and a large number of cofactors. It forms dimeric complexes.

The protein localises to the plastid. Its subcellular location is the chloroplast thylakoid membrane. Its function is as follows. One of the components of the core complex of photosystem II (PSII). PSII is a light-driven water:plastoquinone oxidoreductase that uses light energy to abstract electrons from H(2)O, generating O(2) and a proton gradient subsequently used for ATP formation. It consists of a core antenna complex that captures photons, and an electron transfer chain that converts photonic excitation into a charge separation. The chain is Photosystem II reaction center protein K from Vitis vinifera (Grape).